The following is a 108-amino-acid chain: Nucleoid-associated protein GWCH70_0020 (108 aa).

A disordered region spans residues 1–34 (MMRGGMGNMQKMMKQMQKMQKEMQKAQEQLAEKT). Positions 9–18 (MQKMMKQMQK) are enriched in low complexity. Residues 19 to 34 (MQKEMQKAQEQLAEKT) show a composition bias toward basic and acidic residues.

The protein belongs to the YbaB/EbfC family. Homodimer.

It is found in the cytoplasm. Its subcellular location is the nucleoid. Its function is as follows. Binds to DNA and alters its conformation. May be involved in regulation of gene expression, nucleoid organization and DNA protection. The sequence is that of Nucleoid-associated protein GWCH70_0020 from Geobacillus sp. (strain WCH70).